Reading from the N-terminus, the 352-residue chain is UPF0324 membrane protein BCE_5279 (352 aa).

A run of 10 helical transmembrane segments spans residues 25-47, 52-71, 111-130, 140-162, 169-191, 201-223, 230-252, 267-289, 291-313, and 328-350; these read FGFS…LAEL, IMGQ…AAIG, VLVI…YGLT, GILT…APQV, TAVG…TLLY, YGVF…APGG, AVIV…GLWF, LPIP…GIIP, VVAG…GLGL, and FVAG…YALG.

It belongs to the UPF0324 family.

Its subcellular location is the cell membrane. The protein is UPF0324 membrane protein BCE_5279 of Bacillus cereus (strain ATCC 10987 / NRS 248).